The sequence spans 105 residues: Met repressor (105 aa).

This sequence belongs to the MetJ family. As to quaternary structure, homodimer.

It is found in the cytoplasm. This regulatory protein, when combined with SAM (S-adenosylmethionine) represses the expression of the methionine regulon and of enzymes involved in SAM synthesis. The sequence is that of Met repressor from Klebsiella pneumoniae subsp. pneumoniae (strain ATCC 700721 / MGH 78578).